We begin with the raw amino-acid sequence, 354 residues long: Protein RecA (354 aa).

65–72 (GPESSGKT) is a binding site for ATP.

Belongs to the RecA family.

Its subcellular location is the cytoplasm. Can catalyze the hydrolysis of ATP in the presence of single-stranded DNA, the ATP-dependent uptake of single-stranded DNA by duplex DNA, and the ATP-dependent hybridization of homologous single-stranded DNAs. It interacts with LexA causing its activation and leading to its autocatalytic cleavage. The polypeptide is Protein RecA (Pseudomonas savastanoi pv. phaseolicola (strain 1448A / Race 6) (Pseudomonas syringae pv. phaseolicola (strain 1448A / Race 6))).